The chain runs to 334 residues: Protein-methionine-sulfoxide reductase catalytic subunit MsrP (334 aa).

Residues M1–A44 constitute a signal peptide (tat-type signal). Mo-molybdopterin contacts are provided by residues N88, Y91–E92, C146, T181, N233, R238, and G249–K251.

It belongs to the MsrP family. As to quaternary structure, heterodimer of a catalytic subunit (MsrP) and a heme-binding subunit (MsrQ). Mo-molybdopterin serves as cofactor. Predicted to be exported by the Tat system. The position of the signal peptide cleavage has not been experimentally proven.

It localises to the periplasm. It catalyses the reaction L-methionyl-[protein] + a quinone + H2O = L-methionyl-(S)-S-oxide-[protein] + a quinol. It carries out the reaction L-methionyl-[protein] + a quinone + H2O = L-methionyl-(R)-S-oxide-[protein] + a quinol. Its function is as follows. Part of the MsrPQ system that repairs oxidized periplasmic proteins containing methionine sulfoxide residues (Met-O), using respiratory chain electrons. Thus protects these proteins from oxidative-stress damage caused by reactive species of oxygen and chlorine generated by the host defense mechanisms. MsrPQ is essential for the maintenance of envelope integrity under bleach stress, rescuing a wide series of structurally unrelated periplasmic proteins from methionine oxidation, including the primary periplasmic chaperone SurA and the lipoprotein Pal. The catalytic subunit MsrP is non-stereospecific, being able to reduce both (R-) and (S-) diastereoisomers of methionine sulfoxide. This Salmonella newport (strain SL254) protein is Protein-methionine-sulfoxide reductase catalytic subunit MsrP.